Consider the following 122-residue polypeptide: Large ribosomal subunit protein uL14 (122 aa).

It belongs to the universal ribosomal protein uL14 family. Part of the 50S ribosomal subunit. Forms a cluster with proteins L3 and L19. In the 70S ribosome, L14 and L19 interact and together make contacts with the 16S rRNA in bridges B5 and B8.

Functionally, binds to 23S rRNA. Forms part of two intersubunit bridges in the 70S ribosome. The protein is Large ribosomal subunit protein uL14 of Thermoanaerobacter pseudethanolicus (strain ATCC 33223 / 39E) (Clostridium thermohydrosulfuricum).